Here is a 355-residue protein sequence, read N- to C-terminus: Protein AMBP (355 aa).

Residues Cys55 and Lys138 each coordinate 3-hydroxy-L-kynurenine. An intrachain disulfide couples Cys92 to Cys189. Asn145 carries an N-linked (GlcNAc...) asparagine glycan. Lys150 provides a ligand contact to 3-hydroxy-L-kynurenine. 2 N-linked (GlcNAc...) asparagine glycosylation sites follow: Asn231 and Asn255. Cystine bridges form between Cys236/Cys286, Cys245/Cys269, Cys261/Cys282, Cys292/Cys342, Cys301/Cys325, and Cys317/Cys338. 2 consecutive BPTI/Kunitz inhibitor domains span residues 236 to 286 (CKAA…LQRC) and 292 to 342 (CRLP…QEYC).

The protein in the N-terminal section; belongs to the calycin superfamily. Lipocalin family. As to quaternary structure, I-alpha-I plasma protease inhibitors are assembled from one or two heavy chains (H1, H2 or H3) and one light chain, bikunin. Inter-alpha-inhibitor (I-alpha-I) is composed of H1, H2 and bikunin, inter-alpha-like inhibitor (I-alpha-LI) of H2 and bikunin, and pre-alpha-inhibitor (P-alpha-I) of H3 and bikunin. The precursor is proteolytically processed into two separately functioning proteins. In terms of processing, 3-hydroxykynurenine, an oxidized tryptophan metabolite that is common in biological fluids, reacts with Cys-55, Lys-138, and Lys-150 to form heterogeneous polycyclic chromophores including hydroxanthommatin. The reaction by alpha-1-microglobulin is autocatalytic. The chromophore can react with accessible cysteines forming non-reducible thioether cross-links with other molecules of alpha-1-microglobulin or with other proteins. As to expression, expressed by the liver and secreted in plasma.

Its subcellular location is the secreted. This Pleuronectes platessa (European plaice) protein is Protein AMBP.